Reading from the N-terminus, the 659-residue chain is Forkhead box protein P1-B (659 aa).

Composition is skewed to polar residues over residues M1–Q16 and K32–T41. Disordered regions lie at residues M1 to T41 and E229 to Y263. Residues G289–H314 form a C2H2-type zinc finger. The interval V331–L352 is leucine-zipper. Residues P365 to V369 are CTBP1-binding. The tract at residues P379–L413 is disordered. The span at L387–T404 shows a compositional bias: low complexity. Positions R448–L538 form a DNA-binding region, fork-head. The interval G590–L659 is disordered. Positions G595–G605 are enriched in polar residues. The segment covering P641–L659 has biased composition (basic and acidic residues).

As to expression, shows complex and dynamic expression during early embryonic development. Prominent in many regions of the developing central nervous system, particularly in midbrain-hindbrain boundary, hindbrain and spinal cord. Strongly expressed in the retina, ear, branchial arches, hatching gland, heart, pronephric duct, gut, proctodeum, pectoral fin and swim bladder.

It is found in the nucleus. In terms of biological role, transcriptional repressor. The chain is Forkhead box protein P1-B (foxp1b) from Danio rerio (Zebrafish).